Reading from the N-terminus, the 331-residue chain is Aldo-keto reductase YhdN (331 aa).

Residues T20–W21 and D52 each bind NADP(+). Y57 serves as the catalytic Proton donor. NADP(+)-binding positions include Q175, Y203–R208, K214, R227, G280–R282, and Q286.

It belongs to the aldo/keto reductase family. Aldo/keto reductase 11 subfamily. Monomer.

Aldo-keto reductase (AKR) that displays broad substrate specificity in vitro. Is able to reduce the standard AKR substrates DL-glyceraldehyde, D-erythrose, methylglyoxal, p-nitrobenzaldehyde, benzaldehyde and butyraldehyde, in the presence of NADPH. Cannot use NADH as a cosubstrate. Does not act on glucose, 2-pyridine carboxyaldehyde, fructose and xylose. The physiological function of this enzyme is not clear. May play a role in bacterial stress response and/or in detoxification of reactive aldehydes. The protein is Aldo-keto reductase YhdN (yhdN) of Bacillus subtilis (strain 168).